We begin with the raw amino-acid sequence, 191 residues long: Large ribosomal subunit protein uL3 (191 aa).

Positions 115-137 (GGPASHGSRFHRRHGSIGNREWP) are disordered.

The protein belongs to the universal ribosomal protein uL3 family. As to quaternary structure, part of the 50S ribosomal subunit. Forms a cluster with proteins L14 and L19.

Functionally, one of the primary rRNA binding proteins, it binds directly near the 3'-end of the 23S rRNA, where it nucleates assembly of the 50S subunit. The polypeptide is Large ribosomal subunit protein uL3 (rplC) (Campylobacter jejuni subsp. jejuni serotype O:2 (strain ATCC 700819 / NCTC 11168)).